The primary structure comprises 307 residues: Aspartate carbamoyltransferase catalytic subunit (307 aa).

Positions 56 and 57 each coordinate carbamoyl phosphate. Lys84 contributes to the L-aspartate binding site. Residues Arg106, His136, and Gln139 each coordinate carbamoyl phosphate. Residues Arg169 and Arg221 each coordinate L-aspartate. Carbamoyl phosphate-binding residues include Ala262 and Pro263.

Belongs to the aspartate/ornithine carbamoyltransferase superfamily. ATCase family. In terms of assembly, heterododecamer (2C3:3R2) of six catalytic PyrB chains organized as two trimers (C3), and six regulatory PyrI chains organized as three dimers (R2).

It carries out the reaction carbamoyl phosphate + L-aspartate = N-carbamoyl-L-aspartate + phosphate + H(+). The protein operates within pyrimidine metabolism; UMP biosynthesis via de novo pathway; (S)-dihydroorotate from bicarbonate: step 2/3. Its function is as follows. Catalyzes the condensation of carbamoyl phosphate and aspartate to form carbamoyl aspartate and inorganic phosphate, the committed step in the de novo pyrimidine nucleotide biosynthesis pathway. The chain is Aspartate carbamoyltransferase catalytic subunit from Streptococcus pneumoniae (strain P1031).